The following is a 504-amino-acid chain: UDP-N-acetylmuramoylalanine--D-glutamate ligase (504 aa).

Residue 129–135 (GTNGKTT) participates in ATP binding.

It belongs to the MurCDEF family.

The protein localises to the cytoplasm. It carries out the reaction UDP-N-acetyl-alpha-D-muramoyl-L-alanine + D-glutamate + ATP = UDP-N-acetyl-alpha-D-muramoyl-L-alanyl-D-glutamate + ADP + phosphate + H(+). Its pathway is cell wall biogenesis; peptidoglycan biosynthesis. In terms of biological role, cell wall formation. Catalyzes the addition of glutamate to the nucleotide precursor UDP-N-acetylmuramoyl-L-alanine (UMA). In Burkholderia thailandensis (strain ATCC 700388 / DSM 13276 / CCUG 48851 / CIP 106301 / E264), this protein is UDP-N-acetylmuramoylalanine--D-glutamate ligase.